A 590-amino-acid chain; its full sequence is TPR repeat-containing protein PA4667 (590 aa).

TPR repeat units lie at residues 235 to 268, 269 to 302, 370 to 403, 405 to 438, and 508 to 541; these read VAPL…HPDD, KRVR…FPDD, LPAQ…QPDY, IQLY…YPED, and PAIL…YPDH.

In Pseudomonas aeruginosa (strain ATCC 15692 / DSM 22644 / CIP 104116 / JCM 14847 / LMG 12228 / 1C / PRS 101 / PAO1), this protein is TPR repeat-containing protein PA4667.